The primary structure comprises 203 residues: A-type ATP synthase subunit E (203 aa).

The protein belongs to the V-ATPase E subunit family. As to quaternary structure, has multiple subunits with at least A(3), B(3), C, D, E, F, H, I and proteolipid K(x).

It is found in the cell membrane. Its function is as follows. Component of the A-type ATP synthase that produces ATP from ADP in the presence of a proton gradient across the membrane. This Methanococcus maripaludis (strain C6 / ATCC BAA-1332) protein is A-type ATP synthase subunit E.